The chain runs to 261 residues: MATVSIPANTTALLLDIEGTTTPITFVKDILFPYIKDHLEEHLSAHWEEDECKQDVHLLKKQVEEDLRLNRACAQHALDQSGHTDEEKAIREVVDNVLWQMASDRKTTALKQLQGHMWRAAYAAGRIKGEVYQDVVPSIRRWRRQGLKVYIYSSGSVEAQKLLFGYSVEGDVLDLFDGHFDTNIGAKVESKSYERIAERMGCLSEEIMFLTDITREAKAAEDAGVNVAVVVRPGNMELTEEERSHYNLITTFSQLEVMGRV.

Mg(2+) contacts are provided by D16 and E18. Substrate-binding positions include 153-154 (SS) and K187. D212 contacts Mg(2+).

It belongs to the HAD-like hydrolase superfamily. MasA/MtnC family. As to quaternary structure, monomer. Mg(2+) serves as cofactor.

It localises to the cytoplasm. Its subcellular location is the nucleus. It carries out the reaction 5-methylsulfanyl-2,3-dioxopentyl phosphate + H2O = 1,2-dihydroxy-5-(methylsulfanyl)pent-1-en-3-one + phosphate. It participates in amino-acid biosynthesis; L-methionine biosynthesis via salvage pathway; L-methionine from S-methyl-5-thio-alpha-D-ribose 1-phosphate: step 3/6. It functions in the pathway amino-acid biosynthesis; L-methionine biosynthesis via salvage pathway; L-methionine from S-methyl-5-thio-alpha-D-ribose 1-phosphate: step 4/6. Bifunctional enzyme that catalyzes the enolization of 2,3-diketo-5-methylthiopentyl-1-phosphate (DK-MTP-1-P) into the intermediate 2-hydroxy-3-keto-5-methylthiopentenyl-1-phosphate (HK-MTPenyl-1-P), which is then dephosphorylated to form the acireductone 1,2-dihydroxy-3-keto-5-methylthiopentene (DHK-MTPene). This Salmo salar (Atlantic salmon) protein is Enolase-phosphatase E1 (enoph1).